The chain runs to 214 residues: Dual specificity phosphatase 29 (214 aa).

The Tyrosine-protein phosphatase domain occupies 46–194; the sequence is HVNEVWPNLY…LRELDIELAL (149 aa). Substrate is bound at residue 138–145; that stretch reads HCAMGRSR. Cys139 acts as the Phosphocysteine intermediate in catalysis.

Belongs to the protein-tyrosine phosphatase family. Non-receptor class dual specificity subfamily.

It is found in the cytoplasm. Its subcellular location is the nucleus. The enzyme catalyses O-phospho-L-tyrosyl-[protein] + H2O = L-tyrosyl-[protein] + phosphate. It catalyses the reaction O-phospho-L-seryl-[protein] + H2O = L-seryl-[protein] + phosphate. The catalysed reaction is O-phospho-L-threonyl-[protein] + H2O = L-threonyl-[protein] + phosphate. Functionally, dual specificity phosphatase able to dephosphorylate phosphotyrosine, phosphoserine and phosphothreonine residues within the same substrate, with a preference for phosphotyrosine as a substrate. Involved in the modulation of AMPK and MAPK1/2 signaling pathways. The sequence is that of Dual specificity phosphatase 29 (DUSP29) from Gallus gallus (Chicken).